Here is a 225-residue protein sequence, read N- to C-terminus: UPF0758 protein Shewmr4_3597 (225 aa).

An MPN domain is found at 102–224 (VLTNPDLTRD…IVSFAERGWI (123 aa)). Residues histidine 173, histidine 175, and aspartate 186 each contribute to the Zn(2+) site. The JAMM motif motif lies at 173 to 186 (HNHPSGIAEPSQAD).

This sequence belongs to the UPF0758 family.

The protein is UPF0758 protein Shewmr4_3597 of Shewanella sp. (strain MR-4).